The sequence spans 612 residues: Dihydroxy-acid dehydratase (612 aa).

Asp81 lines the Mg(2+) pocket. Residue Cys122 coordinates [2Fe-2S] cluster. Mg(2+) is bound by residues Asp123 and Lys124. Lys124 is subject to N6-carboxylysine. Cys195 serves as a coordination point for [2Fe-2S] cluster. Residue Glu491 coordinates Mg(2+). Ser517 serves as the catalytic Proton acceptor.

Belongs to the IlvD/Edd family. In terms of assembly, homodimer. [2Fe-2S] cluster is required as a cofactor. It depends on Mg(2+) as a cofactor.

It carries out the reaction (2R)-2,3-dihydroxy-3-methylbutanoate = 3-methyl-2-oxobutanoate + H2O. It catalyses the reaction (2R,3R)-2,3-dihydroxy-3-methylpentanoate = (S)-3-methyl-2-oxopentanoate + H2O. The protein operates within amino-acid biosynthesis; L-isoleucine biosynthesis; L-isoleucine from 2-oxobutanoate: step 3/4. It functions in the pathway amino-acid biosynthesis; L-valine biosynthesis; L-valine from pyruvate: step 3/4. In terms of biological role, functions in the biosynthesis of branched-chain amino acids. Catalyzes the dehydration of (2R,3R)-2,3-dihydroxy-3-methylpentanoate (2,3-dihydroxy-3-methylvalerate) into 2-oxo-3-methylpentanoate (2-oxo-3-methylvalerate) and of (2R)-2,3-dihydroxy-3-methylbutanoate (2,3-dihydroxyisovalerate) into 2-oxo-3-methylbutanoate (2-oxoisovalerate), the penultimate precursor to L-isoleucine and L-valine, respectively. The polypeptide is Dihydroxy-acid dehydratase (Haemophilus influenzae (strain PittGG)).